Consider the following 327-residue polypeptide: Protein UL95 homolog (327 aa).

This sequence belongs to the herpesviridae UL95 family. As to quaternary structure, interacts with ORF24; this interaction may serve as a core scaffold for the assembly of the viral transcription initiation complex. Interacts with ORF66. Interacts with ORF18. Interacts with ORF23. Interacts with ORF31. Interacts with host EPAS1; this interaction stabilizes host EPAS1, ensuring its transcriptional activity.

The protein localises to the host nucleus. Functionally, participates in the expression of late viral mRNAs in part by interacting with ORF24. Expressed before viral DNA replication, assembles at the viral pre-replication complexes (pre-RCs) and thus serves as a hub for recruiting a viral transcription complex to ORF24 to promote late viral gene expression. Also plays a regulatory role in the viral life cycle by regulating host transcriptional regulators HIF1A and EPAS1. The chain is Protein UL95 homolog (ORF34) from Homo sapiens (Human).